A 344-amino-acid chain; its full sequence is Sorting nexin-16 (344 aa).

Over residues 1–10 the composition is skewed to pro residues; that stretch reads MATPYVPVPM. 2 disordered regions span residues 1–66 and 81–107; these read MATP…NTSS and ASSI…EDRP. The segment covering 14-26 has biased composition (polar residues); sequence NSASSFTTNRNQR. Low complexity predominate over residues 27–40; that stretch reads SSSFGSVSTSSNSS. Positions 41 to 66 are enriched in polar residues; sequence KGQLEDSNMGNFKQTSVPDQMDNTSS. The 114-residue stretch at 105–218 folds into the PX domain; it reads DRPSTPTILG…EFLCLDDPPG (114 aa). The a 1,2-diacyl-sn-glycero-3-phospho-(1D-myo-inositol-3-phosphate) site is built by R144, T146, and R184. S222 is modified (phosphoserine). A coiled-coil region spans residues 223–278; it reads LEESRAFCETLEETNYRLQKELLEKQKEMESLKKLLSEKQLHIDTLENRIRTLSLE.

The protein belongs to the sorting nexin family. In terms of assembly, homooligomer. Interacts with EGFR. As to expression, detected in placenta, lung, liver,heart and pancreas.

The protein resides in the early endosome membrane. Its subcellular location is the late endosome membrane. The protein localises to the cytoplasm. It localises to the lysosome. May be involved in several stages of intracellular trafficking. Plays a role in protein transport from early to late endosomes. Plays a role in protein transport to the lysosome. Promotes degradation of EGFR after EGF signaling. Plays a role in intracellular transport of vesicular stomatitis virus nucleocapsids from the endosome to the cytoplasm. The protein is Sorting nexin-16 (SNX16) of Homo sapiens (Human).